Reading from the N-terminus, the 656-residue chain is Rab proteins geranylgeranyltransferase component A 2 (656 aa).

Disordered stretches follow at residues 188-209 and 609-656; these read MHTV…EDKA and PPPN…HLQN. Positions 639–656 are enriched in basic and acidic residues; it reads ESSEESKNLESPEKHLQN. Ser-649 is subject to Phosphoserine.

The protein belongs to the Rab GDI family. Monomer. Heterotrimer composed of RABGGTA, RABGGTB and CHML; within this trimer, RABGGTA and RABGGTB form the catalytic component B, while CHML (component A) mediates Rab protein binding. Interacts with RAB1A, RAB7A and RAB27A, but has much lower affinity for RAB1A, RAB7A and RAB27A than CHM. Interacts with the non-phosphorylated forms of RAB3A, RAB3B, RAB3C, RAB3D, RAB5B, RAB5C, RAB8A, RAB8B, RAB10, RAB12, RAB35, and RAB43.

It is found in the cytoplasm. The protein resides in the cytosol. Substrate-binding subunit (component A) of the Rab geranylgeranyltransferase (GGTase) complex. Binds unprenylated Rab proteins and presents the substrate peptide to the catalytic component B. The component A is thought to be regenerated by transferring its prenylated Rab back to the donor membrane. Less effective than CHM in supporting prenylation of Rab3 family. This chain is Rab proteins geranylgeranyltransferase component A 2 (CHML), found in Homo sapiens (Human).